Reading from the N-terminus, the 230-residue chain is 2,3-bisphosphoglycerate-dependent phosphoglycerate mutase 1 (230 aa).

Residues 8–15, 21–22, arginine 60, 87–90, lysine 98, 114–115, and 183–184 each bind substrate; these read RHGQSEWN, TG, ERHY, RR, and GN. Histidine 9 acts as the Tele-phosphohistidine intermediate in catalysis. Catalysis depends on glutamate 87, which acts as the Proton donor/acceptor.

It belongs to the phosphoglycerate mutase family. BPG-dependent PGAM subfamily.

It carries out the reaction (2R)-2-phosphoglycerate = (2R)-3-phosphoglycerate. It participates in carbohydrate degradation; glycolysis; pyruvate from D-glyceraldehyde 3-phosphate: step 3/5. Catalyzes the interconversion of 2-phosphoglycerate and 3-phosphoglycerate. The sequence is that of 2,3-bisphosphoglycerate-dependent phosphoglycerate mutase 1 from Lactobacillus johnsonii (strain CNCM I-12250 / La1 / NCC 533).